The sequence spans 111 residues: Large ribosomal subunit protein uL24 (111 aa).

A disordered region spans residues Asn85 to Gln111. Positions Asp88–Gln111 are enriched in basic and acidic residues.

This sequence belongs to the universal ribosomal protein uL24 family. Part of the 50S ribosomal subunit.

Functionally, one of two assembly initiator proteins, it binds directly to the 5'-end of the 23S rRNA, where it nucleates assembly of the 50S subunit. Its function is as follows. Located at the polypeptide exit tunnel on the outside of the subunit. The sequence is that of Large ribosomal subunit protein uL24 from Metallosphaera sedula (strain ATCC 51363 / DSM 5348 / JCM 9185 / NBRC 15509 / TH2).